A 458-amino-acid polypeptide reads, in one-letter code: Probable mitochondrial chaperone BCS1-B (458 aa).

Residues 1–26 lie on the Mitochondrial intermembrane side of the membrane; it reads MENVITNNNKGLPKSILKFIPEPIQP. A helical transmembrane segment spans residues 27-47; sequence LFENPFFSAGFGLIGVGSILA. The Mitochondrial matrix portion of the chain corresponds to 48–458; the sequence is MGRKGFQQAM…INNLNELIKK (411 aa). 248–255 lines the ATP pocket; the sequence is GPPGTGKS.

The protein belongs to the AAA ATPase family. BCS1 subfamily.

Its subcellular location is the mitochondrion inner membrane. The catalysed reaction is ATP + H2O = ADP + phosphate + H(+). Its function is as follows. Chaperone necessary for the assembly of mitochondrial respiratory chain complex III. The chain is Probable mitochondrial chaperone BCS1-B (bcsl1b) from Dictyostelium discoideum (Social amoeba).